A 356-amino-acid polypeptide reads, in one-letter code: uncharacterized protein (356 aa).

This is an uncharacterized protein from Methanocaldococcus jannaschii (strain ATCC 43067 / DSM 2661 / JAL-1 / JCM 10045 / NBRC 100440) (Methanococcus jannaschii).